The sequence spans 444 residues: Spermidine/putrescine import ATP-binding protein PotA (444 aa).

The ABC transporter domain maps to 11–332; sequence ISLVDVDKEF…PVNKWVANFI (322 aa). 43–50 serves as a coordination point for ATP; the sequence is GPSGSGKT. The segment at 111-201 is insert; the sequence is RIKKKAEEIP…ESFKKKYLTR (91 aa).

The protein belongs to the ABC transporter superfamily. Spermidine/putrescine importer (TC 3.A.1.11.1) family. The complex is composed of two ATP-binding proteins (PotA), two transmembrane proteins (PotB and PotC) and a solute-binding protein (PotD).

It is found in the cell membrane. It carries out the reaction ATP + H2O + polyamine-[polyamine-binding protein]Side 1 = ADP + phosphate + polyamineSide 2 + [polyamine-binding protein]Side 1.. In terms of biological role, part of the ABC transporter complex PotABCD involved in spermidine/putrescine import. Responsible for energy coupling to the transport system. This is Spermidine/putrescine import ATP-binding protein PotA from Mesomycoplasma hyopneumoniae (strain 232) (Mycoplasma hyopneumoniae).